The following is a 916-amino-acid chain: Isoleucine--tRNA ligase (916 aa).

The 'HIGH' region signature appears at 58 to 68 (PYANGHLHIGH). An L-isoleucyl-5'-AMP-binding site is contributed by E568. A 'KMSKS' region motif is present at residues 609 to 613 (KMSKS). Residue K612 coordinates ATP. Residues C891, C894, C906, and C909 each coordinate Zn(2+).

Belongs to the class-I aminoacyl-tRNA synthetase family. IleS type 1 subfamily. As to quaternary structure, monomer. It depends on Zn(2+) as a cofactor.

The protein localises to the cytoplasm. The catalysed reaction is tRNA(Ile) + L-isoleucine + ATP = L-isoleucyl-tRNA(Ile) + AMP + diphosphate. In terms of biological role, catalyzes the attachment of isoleucine to tRNA(Ile). As IleRS can inadvertently accommodate and process structurally similar amino acids such as valine, to avoid such errors it has two additional distinct tRNA(Ile)-dependent editing activities. One activity is designated as 'pretransfer' editing and involves the hydrolysis of activated Val-AMP. The other activity is designated 'posttransfer' editing and involves deacylation of mischarged Val-tRNA(Ile). This Campylobacter fetus subsp. fetus (strain 82-40) protein is Isoleucine--tRNA ligase.